The following is a 194-amino-acid chain: Large ribosomal subunit protein eL15 (194 aa).

The interval 164–194 is disordered; it reads SAGKKGRGLRNKGIGAEKVRPSIRAHGRRGK. Residues 184–194 are compositionally biased toward basic residues; sequence PSIRAHGRRGK.

It belongs to the eukaryotic ribosomal protein eL15 family.

The sequence is that of Large ribosomal subunit protein eL15 (rpl15e) from Methanocaldococcus jannaschii (strain ATCC 43067 / DSM 2661 / JAL-1 / JCM 10045 / NBRC 100440) (Methanococcus jannaschii).